The sequence spans 33 residues: Brevinin-2DYc (33 aa).

Cys27 and Cys33 form a disulfide bridge.

Expressed by the skin glands.

It localises to the secreted. Its function is as follows. Antimicrobial peptide. A mixture of Brevinin-2DYc/2DYd is active against the Gram-positive bacterium S.aureus (MIC=15 uM) and the Gram-negative bacterium E.coli (MIC=15 uM). The chain is Brevinin-2DYc from Rana dybowskii (Dybovsky's frog).